A 144-amino-acid chain; its full sequence is Acidic phospholipase A2 S15-109 (144 aa).

Residues 1–19 (MYPAHLLVLLAVCVSLLGA) form the signal peptide. Positions 20–27 (SDIPPQPL) are excised as a propeptide. Intrachain disulfides connect C38–C98, C54–C143, C56–C72, C71–C126, C78–C119, C87–C112, and C105–C117. The Ca(2+) site is built by Y55, G57, and G59. H75 is a catalytic residue. Residue D76 coordinates Ca(2+). D120 is a catalytic residue.

This sequence belongs to the phospholipase A2 family. Group I subfamily. D49 sub-subfamily. Ca(2+) is required as a cofactor. As to expression, expressed by the venom gland.

The protein localises to the secreted. It carries out the reaction a 1,2-diacyl-sn-glycero-3-phosphocholine + H2O = a 1-acyl-sn-glycero-3-phosphocholine + a fatty acid + H(+). Its function is as follows. Snake venom phospholipase A2 (PLA2) that inhibits collagen-induced platelet aggregation. PLA2 catalyzes the calcium-dependent hydrolysis of the 2-acyl groups in 3-sn-phosphoglycerides. The sequence is that of Acidic phospholipase A2 S15-109 from Austrelaps superbus (Lowland copperhead snake).